We begin with the raw amino-acid sequence, 444 residues long: Tol-Pal system protein TolB (444 aa).

The first 19 residues, 1–19, serve as a signal peptide directing secretion; that stretch reads MRNIIYFILSLLFSVTSYA.

Belongs to the TolB family. The Tol-Pal system is composed of five core proteins: the inner membrane proteins TolA, TolQ and TolR, the periplasmic protein TolB and the outer membrane protein Pal. They form a network linking the inner and outer membranes and the peptidoglycan layer.

It is found in the periplasm. Its function is as follows. Part of the Tol-Pal system, which plays a role in outer membrane invagination during cell division and is important for maintaining outer membrane integrity. This is Tol-Pal system protein TolB from Rickettsia conorii (strain ATCC VR-613 / Malish 7).